Reading from the N-terminus, the 1621-residue chain is ALK tyrosine kinase receptor (1621 aa).

Residues 1 to 18 (MGAAGFLWLLPPLLLAAA) form the signal peptide. Residues 19 to 1042 (SYSGAATDQR…PHLPLSLILS (1024 aa)) are Extracellular-facing. The tract at residues 48–70 (RLQRKSLAVDFVVPSLFRVYARD) is heparin-binding region. N-linked (GlcNAc...) asparagine glycosylation is found at asparagine 174, asparagine 248, asparagine 289, asparagine 328, asparagine 415, asparagine 428, asparagine 449, asparagine 567, asparagine 575, asparagine 631, and asparagine 673. Residues 268–431 (LECSFDFPCE…DFFALKNCSE (164 aa)) form the MAM 1 domain. Residues 441–477 (LQSSFTCWNGTVLQLGQACDFHQDCAQGEDEGQLCSK) enclose the LDL-receptor class A domain. One can recognise an MAM 2 domain in the interval 482-640 (FYCNFENGFC…NISISLDCYL (159 aa)). Cysteine 692 and cysteine 705 form a disulfide bridge. N-linked (GlcNAc...) asparagine glycosylation occurs at asparagine 713. Cysteine 787 and cysteine 798 form a disulfide bridge. N-linked (GlcNAc...) asparagine glycans are attached at residues asparagine 812, asparagine 868, and asparagine 890. The cysteines at positions 910 and 932 are disulfide-linked. N-linked (GlcNAc...) asparagine glycosylation is present at asparagine 990. Intrachain disulfides connect cysteine 991-cysteine 999, cysteine 994-cysteine 1010, and cysteine 1012-cysteine 1025. Residues 991 to 1029 (CSHCEVDECHMDPESHKVICFCDHGTVLADDGVSCIVSP) are EGF-like. The chain crosses the membrane as a helical span at residues 1043-1063 (VVTSALVAALVLAFSGIMIVY). Residues 1064–1621 (RRKHQELQAM…SKNKVTQPGP (558 aa)) are Cytoplasmic-facing. 3 positions are modified to phosphotyrosine: tyrosine 1082, tyrosine 1096, and tyrosine 1100. The region spanning 1120-1396 (ITLIRGLGHG…IEYCTQDPDV (277 aa)) is the Protein kinase domain. ATP contacts are provided by residues 1126–1134 (LGHGAFGEV) and histidine 1128. Residue tyrosine 1135 is modified to Phosphotyrosine. Residues lysine 1154 and 1201–1203 (ELM) contribute to the ATP site. The active-site Proton acceptor is the aspartate 1253. Aspartate 1274 is an ATP binding site. Tyrosine 1282 carries the phosphotyrosine modification. The segment at 1412-1556 (EEKVPMRPKD…WTGPGAGPRR (145 aa)) is disordered. Over residues 1414 to 1423 (KVPMRPKDPE) the composition is skewed to basic and acidic residues. Residues 1441–1461 (SAAPQPAALTAPGPSVKKPPG) are compositionally biased toward low complexity. A compositionally biased stretch (gly residues) spans 1462 to 1472 (AGAGAGAGAGA). Positions 1506–1518 (NKPTSLWNPTYGS) are enriched in polar residues. Tyrosine 1516 bears the Phosphotyrosine mark. Residues 1543–1552 (AEGGWTGPGA) show a composition bias toward gly residues.

It belongs to the protein kinase superfamily. Tyr protein kinase family. Insulin receptor subfamily. As to quaternary structure, homodimer; homodimerizes following heparin- and ligand-binding. Interacts with CBL, IRS1, PIK3R1 and PLCG1. Interacts with FRS2 and SHC1. Interacts with PTN and MDK. In terms of processing, phosphorylated at tyrosine residues by autocatalysis, which activates kinase activity. In cells not stimulated by a ligand, receptor protein tyrosine phosphatase beta and zeta complex (PTPRB/PTPRZ1) dephosphorylates ALK at the sites in ALK that are undergoing autophosphorylation through autoactivation. Mainly expressed in central nervous system (CNS) and other parts of the brain such as the paraventricular nucleus (PVN) of the hypothalamus. Expression is also found in peripheral nervous systems, eye, nasal epithelium, olfactory nerve, tongue, skin, tissue surrounding the esophagus, stomach, midgut, as well as testis and ovary.

The protein localises to the cell membrane. It catalyses the reaction L-tyrosyl-[protein] + ATP = O-phospho-L-tyrosyl-[protein] + ADP + H(+). With respect to regulation, activated upon ALKAL2 ligand-binding. ALKAL2-driven activation is coupled with heparin-binding. Following ligand-binding, homodimerizes and autophosphorylates, activating its kinase activity. Inactivated through dephosphorylation by receptor protein tyrosine phosphatase beta and zeta complex (PTPRB/PTPRZ1) when there is no stimulation by a ligand. Functionally, neuronal receptor tyrosine kinase that is essentially and transiently expressed in specific regions of the central and peripheral nervous systems and plays an important role in the genesis and differentiation of the nervous system. Also acts as a key thinness protein involved in the resistance to weight gain: in hypothalamic neurons, controls energy expenditure acting as a negative regulator of white adipose tissue lipolysis and sympathetic tone to fine-tune energy homeostasis. Following activation by ALKAL2 ligand at the cell surface, transduces an extracellular signal into an intracellular response. In contrast, ALKAL1 is not a potent physiological ligand for ALK. Ligand-binding to the extracellular domain induces tyrosine kinase activation, leading to activation of the mitogen-activated protein kinase (MAPK) pathway. Phosphorylates almost exclusively at the first tyrosine of the Y-x-x-x-Y-Y motif. Induces tyrosine phosphorylation of CBL, FRS2, IRS1 and SHC1, as well as of the MAP kinases MAPK1/ERK2 and MAPK3/ERK1. ALK activation may also be regulated by pleiotrophin (PTN) and midkine (MDK). PTN-binding induces MAPK pathway activation, which is important for the anti-apoptotic signaling of PTN and regulation of cell proliferation. MDK-binding induces phosphorylation of the ALK target insulin receptor substrate (IRS1), activates mitogen-activated protein kinases (MAPKs) and PI3-kinase, resulting also in cell proliferation induction. Drives NF-kappa-B activation, probably through IRS1 and the activation of the AKT serine/threonine kinase. Recruitment of IRS1 to activated ALK and the activation of NF-kappa-B are essential for the autocrine growth and survival signaling of MDK. This is ALK tyrosine kinase receptor from Mus musculus (Mouse).